The primary structure comprises 402 residues: 1-deoxy-D-xylulose 5-phosphate reductoisomerase (402 aa).

NADPH contacts are provided by Thr-10, Gly-11, Ser-12, Ile-13, Asn-38, and Asn-124. Lys-125 contributes to the 1-deoxy-D-xylulose 5-phosphate binding site. Glu-126 is an NADPH binding site. Asp-150 contacts Mn(2+). 1-deoxy-D-xylulose 5-phosphate is bound by residues Ser-151, Glu-152, Ser-186, and His-209. Glu-152 is a binding site for Mn(2+). Gly-215 lines the NADPH pocket. Ser-222, Asn-227, Lys-228, and Glu-231 together coordinate 1-deoxy-D-xylulose 5-phosphate. Glu-231 provides a ligand contact to Mn(2+).

The protein belongs to the DXR family. The cofactor is Mg(2+). It depends on Mn(2+) as a cofactor.

It carries out the reaction 2-C-methyl-D-erythritol 4-phosphate + NADP(+) = 1-deoxy-D-xylulose 5-phosphate + NADPH + H(+). The protein operates within isoprenoid biosynthesis; isopentenyl diphosphate biosynthesis via DXP pathway; isopentenyl diphosphate from 1-deoxy-D-xylulose 5-phosphate: step 1/6. In terms of biological role, catalyzes the NADPH-dependent rearrangement and reduction of 1-deoxy-D-xylulose-5-phosphate (DXP) to 2-C-methyl-D-erythritol 4-phosphate (MEP). The chain is 1-deoxy-D-xylulose 5-phosphate reductoisomerase from Vibrio vulnificus (strain YJ016).